The chain runs to 34 residues: Photosystem I reaction center subunit XII (34 aa).

The chain crosses the membrane as a helical span at residues 9–29; the sequence is LIILGLIVVMHAGVLALRLGI.

It belongs to the PsaM family.

The protein resides in the cellular thylakoid membrane. The chain is Photosystem I reaction center subunit XII from Prochlorococcus marinus subsp. pastoris (strain CCMP1986 / NIES-2087 / MED4).